The chain runs to 492 residues: Katanin p60 ATPase-containing subunit A1 (492 aa).

The tract at residues 91–158 is disordered; sequence PAHDGEVWSL…MKPVRAREKK (68 aa). Positions 138 to 147 are enriched in polar residues; it reads LPSSKNTNNV. 250-257 is an ATP binding site; that stretch reads GPPGTGKT.

The protein belongs to the AAA ATPase family. Katanin p60 subunit A1 subfamily. As to quaternary structure, can homooligomerize into hexameric rings, which may be promoted by interaction with microtubules. Interacts with katnb1, which may serve as a targeting subunit.

The protein localises to the cytoplasm. Its subcellular location is the cytoskeleton. The protein resides in the microtubule organizing center. It localises to the centrosome. It is found in the spindle pole. The protein localises to the spindle. The enzyme catalyses n ATP + n H2O + a microtubule = n ADP + n phosphate + (n+1) alpha/beta tubulin heterodimers.. With respect to regulation, ATPase activity is stimulated by microtubules, which promote homooligomerization. ATP-dependent microtubule severing is stimulated by interaction with katnb1. Its function is as follows. Catalytic subunit of a complex which severs microtubules in an ATP-dependent manner. Microtubule severing may promote rapid reorganization of cellular microtubule arrays and the release of microtubules from the centrosome following nucleation. This Xenopus tropicalis (Western clawed frog) protein is Katanin p60 ATPase-containing subunit A1 (katna1).